We begin with the raw amino-acid sequence, 249 residues long: Proteasome subunit alpha (249 aa).

Residues 229 to 249 form a disordered region; the sequence is EAREAEEAAEAQSSEDGGATD.

The protein belongs to the peptidase T1A family. As to quaternary structure, the 20S proteasome core is composed of 14 alpha and 14 beta subunits that assemble into four stacked heptameric rings, resulting in a barrel-shaped structure. The two inner rings, each composed of seven catalytic beta subunits, are sandwiched by two outer rings, each composed of seven alpha subunits. The catalytic chamber with the active sites is on the inside of the barrel. Has a gated structure, the ends of the cylinder being occluded by the N-termini of the alpha-subunits. Is capped by the proteasome-associated ATPase, ARC.

It localises to the cytoplasm. Its pathway is protein degradation; proteasomal Pup-dependent pathway. Its activity is regulated as follows. The formation of the proteasomal ATPase ARC-20S proteasome complex, likely via the docking of the C-termini of ARC into the intersubunit pockets in the alpha-rings, may trigger opening of the gate for substrate entry. Interconversion between the open-gate and close-gate conformations leads to a dynamic regulation of the 20S proteasome proteolysis activity. Component of the proteasome core, a large protease complex with broad specificity involved in protein degradation. In Thermobifida fusca (strain YX), this protein is Proteasome subunit alpha.